The following is a 325-amino-acid chain: Aldo-keto reductase family 1 member A1 (325 aa).

Thr-2 carries the N-acetylthreonine modification. Ser-4 is subject to Phosphoserine. NADP(+) contacts are provided by residues 11–20 (GQKMPLIGLG), Thr-21, and Trp-22. The N-linked (Glc) (glycation) lysine glycan is linked to Lys-23. Ser-38 carries the post-translational modification Phosphoserine. Asp-45 provides a ligand contact to NADP(+). Catalysis depends on Tyr-50, which acts as the Proton donor. 2 N-linked (Glc) (glycation) lysine glycosylation sites follow: Lys-68 and Lys-85. Lys-127 carries the post-translational modification N6-acetyllysine; alternate. Residue Lys-127 is modified to N6-succinyllysine; alternate. N-linked (Glc) (glycation) lysine glycosylation is present at Lys-141. Residue Lys-145 is modified to N6-succinyllysine. Residue Lys-153 is glycosylated (N-linked (Glc) (glycation) lysine). NADP(+) contacts are provided by Ser-162, Asn-163, Ser-211, Leu-213, Ser-215, Ser-216, Lys-263, Ser-264, Ile-265, Thr-266, Arg-269, Gln-272, and Asn-273. Ser-211 carries the phosphoserine modification.

The protein belongs to the aldo/keto reductase family. As to quaternary structure, monomer. In terms of tissue distribution, widely expressed.

It is found in the cytoplasm. Its subcellular location is the cytosol. It localises to the apical cell membrane. It catalyses the reaction a primary alcohol + NADP(+) = an aldehyde + NADPH + H(+). The catalysed reaction is L-gulonate + NADP(+) = aldehydo-D-glucuronate + NADPH + H(+). The enzyme catalyses L-gulono-1,4-lactone + NADP(+) = D-glucurono-3,6-lactone + NADPH + H(+). It carries out the reaction allyl alcohol + NADP(+) = acrolein + NADPH + H(+). It catalyses the reaction glycerol + NADP(+) = D-glyceraldehyde + NADPH + H(+). The catalysed reaction is glycerol + NADP(+) = L-glyceraldehyde + NADPH + H(+). The enzyme catalyses hydroxyacetone + NADP(+) = methylglyoxal + NADPH + H(+). It carries out the reaction 3-deoxyfructose + NADP(+) = 3-deoxyglucosone + NADPH + H(+). It catalyses the reaction (R)-mevalonate + NADP(+) = (R)-mevaldate + NADPH + H(+). The catalysed reaction is pyridine 3-methanol + NADP(+) = pyridine-3-carbaldehyde + NADPH + H(+). The enzyme catalyses S-nitroso-CoA + NADPH + H(+) = sulfinamide-CoA + NADP(+). It carries out the reaction S-nitrosoglutathione + NADPH + H(+) = S-(hydroxysulfenamide)glutathione + NADP(+). Its function is as follows. Catalyzes the NADPH-dependent reduction of a wide variety of carbonyl-containing compounds to their corresponding alcohols. Displays enzymatic activity towards endogenous metabolites such as aromatic and aliphatic aldehydes, ketones, monosaccharides and bile acids. Plays an important role in ascorbic acid biosynthesis by catalyzing the reduction of D-glucuronic acid and D-glucurono-gamma-lactone. Functions as a detoxifiying enzyme by reducing a range of toxic aldehydes. Reduces methylglyoxal and 3-deoxyglucosone, which are present at elevated levels under hyperglycemic conditions and are cytotoxic. Involved also in the detoxification of lipid-derived aldehydes like acrolein. Plays a role in the activation of procarcinogens, such as polycyclic aromatic hydrocarbon trans-dihydrodiols, and in the metabolism of various xenobiotics and drugs. Also acts as an inhibitor of protein S-nitrosylation by mediating degradation of S-nitroso-coenzyme A (S-nitroso-CoA), a cofactor required to S-nitrosylate proteins. S-nitroso-CoA reductase activity is involved in reprogramming intermediary metabolism in renal proximal tubules, notably by inhibiting protein S-nitrosylation of isoform 2 of PKM (PKM2). Also acts as a S-nitroso-glutathione reductase by catalyzing the NADPH-dependent reduction of S-nitrosoglutathione. Displays no reductase activity towards retinoids. The polypeptide is Aldo-keto reductase family 1 member A1 (Akr1a1) (Rattus norvegicus (Rat)).